We begin with the raw amino-acid sequence, 172 residues long: NADH-ubiquinone oxidoreductase chain 6 (172 aa).

5 helical membrane-spanning segments follow: residues 1-21 (MAFY…AIAS), 24-44 (APYF…GILV), 53-73 (LILF…SAAL), 86-106 (VVFW…GFLL), and 140-160 (GKML…VLEV).

Belongs to the complex I subunit 6 family. As to quaternary structure, core subunit of respiratory chain NADH dehydrogenase (Complex I) which is composed of 45 different subunits.

It is found in the mitochondrion inner membrane. It carries out the reaction a ubiquinone + NADH + 5 H(+)(in) = a ubiquinol + NAD(+) + 4 H(+)(out). Core subunit of the mitochondrial membrane respiratory chain NADH dehydrogenase (Complex I) which catalyzes electron transfer from NADH through the respiratory chain, using ubiquinone as an electron acceptor. Essential for the catalytic activity and assembly of complex I. This is NADH-ubiquinone oxidoreductase chain 6 (mt-nd6) from Danio rerio (Zebrafish).